We begin with the raw amino-acid sequence, 147 residues long: 16 kDa heat shock protein B (147 aa).

Residues 29–141 (NEAGSTYPPY…APSAFRSAAA (113 aa)) enclose the sHSP domain.

It belongs to the small heat shock protein (HSP20) family.

This chain is 16 kDa heat shock protein B (ibpB), found in Azotobacter vinelandii.